A 920-amino-acid polypeptide reads, in one-letter code: Sensor histidine kinase SsrA (920 aa).

Over 1 to 19 (MNLLNLKNTLQTSLVIRLT) the chain is Cytoplasmic. Residues 20 to 40 (FLFLLTTIIIWLLSVLTAAYI) form a helical membrane-spanning segment. The Periplasmic portion of the chain corresponds to 41-291 (SMVQKRQHII…YGNLHNRILK (251 aa)). The helical transmembrane segment at 292–312 (IILQQIPFTLTALVLMTSAFC) threads the bilayer. The Cytoplasmic portion of the chain corresponds to 313 to 920 (WLLHRSLAKP…RMIFKNYTIT (608 aa)). Residues 317-369 (RSLAKPLWRFVDVINKTATAPLSTRLPAQRLDELDSIAGAFNQLLDTLQVQYD) enclose the HAMP domain. Residues 354–395 (AGAFNQLLDTLQVQYDNLENKVAERTQALNEAKKRAERANKR) are a coiled coil. In terms of domain architecture, Histidine kinase spans 402–614 (VISHELRTPM…CVSLVLPLQE (213 aa)). His-405 and Asp-549 together coordinate ATP. His-405 bears the Phosphohistidine; by autocatalysis mark. The Response regulatory domain occupies 690–808 (QILLVDDADI…TLARYISIAA (119 aa)). Position 739 is a 4-aspartylphosphate (Asp-739).

In terms of processing, autophosphorylated.

The protein resides in the cell inner membrane. It catalyses the reaction ATP + protein L-histidine = ADP + protein N-phospho-L-histidine.. Functionally, member of the two-component regulatory system SsrA/SsrB (SpiR/SsrB) that is required for intracellular proliferation and systemic dissemination within the host. When inside acidic Salmonella-containing vesicles (SCV) within host cells the SsrA sensor kinase autophosphorylates and the phosphoryl group is transferred to the response regulator SsrB; phosphorylated SsrB activates the expression of genes encoding virulence proteins, including pathogenicity island 2 (SPI2) and other horizontally acquired genes, and antagonizes the action of transcriptional repressor hns (H-NS). The polypeptide is Sensor histidine kinase SsrA (Salmonella typhimurium (strain LT2 / SGSC1412 / ATCC 700720)).